Consider the following 25-residue polypeptide: ENFSGGCVAGYMRTPDGRCKPTFYQ.

Cysteine 7 and cysteine 19 are joined by a disulfide. Residue glutamine 25 is modified to Glutamine amide.

It belongs to the GBP/PSP1/paralytic peptide family. In terms of tissue distribution, hemolymph.

Functionally, biogenic peptide that prevents, in lepidopteran, the onset of metamorphosis from larva to pupa. This growth-blocking peptide has repressive activity against juvenile hormone esterase. This Cotesia kariyai (Parasitic wasp) protein is Growth-blocking peptide.